The following is a 182-amino-acid chain: CDP-diacylglycerol--glycerol-3-phosphate 3-phosphatidyltransferase (182 aa).

The Cytoplasmic segment spans residues 2–12; the sequence is QFNIPTLLTLF. Residues 13–37 traverse the membrane as a helical segment; it reads RVILIPFFVLVFYLPVTWSPFAAAL. The Periplasmic segment spans residues 38–60; sequence IFCVAAVTDWFDGFLARRWNQST. The helical transmembrane segment at 61–81 threads the bilayer; that stretch reads RFGAFLDPVADKVLVAIAMVL. The Cytoplasmic segment spans residues 82–86; that stretch reads VTEHY. Residues 87 to 107 traverse the membrane as a helical segment; the sequence is HSWWVTLPAATMIAREIIISA. Residues 108 to 145 lie on the Periplasmic side of the membrane; sequence LREWMAELGKRSSVAVSWIGKVKTTAQMVALAWLLWRP. A helical transmembrane segment spans residues 146-168; sequence NIWVEYAGIALFFVAAVLTLWSM. Residues 169-181 are Cytoplasmic-facing; it reads LQYLSAARADLLD.

The protein belongs to the CDP-alcohol phosphatidyltransferase class-I family.

It is found in the cell inner membrane. It catalyses the reaction a CDP-1,2-diacyl-sn-glycerol + sn-glycerol 3-phosphate = a 1,2-diacyl-sn-glycero-3-phospho-(1'-sn-glycero-3'-phosphate) + CMP + H(+). Its pathway is phospholipid metabolism; phosphatidylglycerol biosynthesis; phosphatidylglycerol from CDP-diacylglycerol: step 1/2. Catalyzes the conversion of cytidine diphosphate diacylglycerol (CDP-DG) and glycerol 3-phosphate into phosphatidylglycerol. Essential for the synthesis of anionic phospholipids, thereby playing a role in balancing the ratio of zwitterionic and anionic phospholipids, which is thought to be important for normal membrane function. The polypeptide is CDP-diacylglycerol--glycerol-3-phosphate 3-phosphatidyltransferase (Shigella sonnei (strain Ss046)).